Reading from the N-terminus, the 124-residue chain is Small ribosomal subunit protein uS12 (124 aa).

Asp-90 is modified (3-methylthioaspartic acid).

This sequence belongs to the universal ribosomal protein uS12 family. In terms of assembly, part of the 30S ribosomal subunit. Contacts proteins S8 and S17. May interact with IF1 in the 30S initiation complex.

With S4 and S5 plays an important role in translational accuracy. Functionally, interacts with and stabilizes bases of the 16S rRNA that are involved in tRNA selection in the A site and with the mRNA backbone. Located at the interface of the 30S and 50S subunits, it traverses the body of the 30S subunit contacting proteins on the other side and probably holding the rRNA structure together. The combined cluster of proteins S8, S12 and S17 appears to hold together the shoulder and platform of the 30S subunit. The polypeptide is Small ribosomal subunit protein uS12 (Wolbachia sp. subsp. Drosophila simulans (strain wRi)).